The primary structure comprises 218 residues: 25 kDa calcium-binding protein (218 aa).

EF-hand domains lie at 24 to 59 (GAKTVARRIFENYDKGRKGRIENTDCVPMITEAYKS), 66 to 101 (PSSDDIKAYHRVLDRNGDGIVTYQDIEELCIRYLTG), 128 to 163 (AKLDVARRLFKRYDKDGSGQLQDDEIAGLLKDTYAE), and 171 to 206 (PTKEDVKIWLQMADTNSDGSVSLEEYEDLIIKSLQK). Ca(2+) is bound by residues D37, R43, D48, D79, N81, D83, D90, D141, D143, S145, Q147, E152, D184, N186, D188, S190, and E195.

In terms of biological role, expected to play a crucial role in calcium-dependent regulation of ciliary movement. The protein is 25 kDa calcium-binding protein of Tetrahymena thermophila.